Here is a 394-residue protein sequence, read N- to C-terminus: Large ribosomal subunit protein bL27m (394 aa).

Residues methionine 1–threonine 34 constitute a mitochondrion transit peptide. 2 disordered regions span residues threonine 36–lysine 57 and alanine 145–serine 181. The segment covering alanine 145 to glutamine 170 has biased composition (basic and acidic residues).

The protein belongs to the bacterial ribosomal protein bL27 family.

It localises to the mitochondrion. Component of the large subunit of mitochondrial ribosome. The chain is Large ribosomal subunit protein bL27m (MRPL2) from Debaryomyces hansenii (strain ATCC 36239 / CBS 767 / BCRC 21394 / JCM 1990 / NBRC 0083 / IGC 2968) (Yeast).